A 356-amino-acid chain; its full sequence is sn-glycerol-3-phosphate import ATP-binding protein UgpC (356 aa).

Residues 4-235 (LKLQAVTKSW…PASLFVASFI (232 aa)) form the ABC transporter domain. 37 to 44 (GPSGCGKS) serves as a coordination point for ATP.

It belongs to the ABC transporter superfamily. sn-glycerol-3-phosphate importer (TC 3.A.1.1.3) family. The complex is composed of two ATP-binding proteins (UgpC), two transmembrane proteins (UgpA and UgpE) and a solute-binding protein (UgpB).

It localises to the cell inner membrane. It carries out the reaction sn-glycerol 3-phosphate(out) + ATP + H2O = sn-glycerol 3-phosphate(in) + ADP + phosphate + H(+). In terms of biological role, part of the ABC transporter complex UgpBAEC involved in sn-glycerol-3-phosphate (G3P) import. Responsible for energy coupling to the transport system. This Escherichia coli O6:K15:H31 (strain 536 / UPEC) protein is sn-glycerol-3-phosphate import ATP-binding protein UgpC.